A 91-amino-acid chain; its full sequence is Alpha-defensin-related sequence 2 (91 aa).

A signal peptide spans 1–19; it reads MKKLVLLFALVLLAFQVQA. Residues 20–58 constitute a propeptide that is removed on maturation; that stretch reads DSIQNTDEETKTEEQPGEKDQAVSVSFGDPQGSALQDAA. Residues 22-48 are disordered; it reads IQNTDEETKTEEQPGEKDQAVSVSFGD. The span at 27 to 40 shows a compositional bias: basic and acidic residues; that stretch reads EETKTEEQPGEKDQ. 7 consecutive repeat copies span residues 65–67, 68–70, 71–73, 74–76, 77–79, 80–82, and 83–85. The interval 65 to 85 is 7 X 3 AA tandem repeats of C-P-X; that stretch reads CPQCPRCPSCPSCPRCPRCPR.

The protein belongs to the alpha-defensin family. Small bowel, spleen, colon, kidney, liver, stomach and femur marrow.

The protein resides in the secreted. Apparent precursor of a secreted, cationic, proline- and cysteine-rich peptide that contains Cys-Pro-Xaa repeats. Unlike cryptdin, the proposed mature peptide region lacks the structural motif characteristic of defensins. It may have microbicidal activities. This is Alpha-defensin-related sequence 2 (Defa-rs2) from Mus musculus (Mouse).